Consider the following 499-residue polypeptide: C2H2-type transcription factor RPN4 (499 aa).

The disordered stretch occupies residues 329-397; sequence QTTKKDNSKP…TTKSTHTHSK (69 aa). Residues 331–344 show a composition bias toward basic and acidic residues; that stretch reads TKKDNSKPVEKTVV. A compositionally biased stretch (polar residues) spans 345-363; sequence EKTSSVTKAGSNHSRSTLA. The segment at 405–436 adopts a C2H2-type zinc-finger fold; the sequence is FVCELVNSVTNEVCGAQFSRTYDLTRHQNTIH.

It is found in the nucleus. Functionally, transcription factor that acts as a transcriptional activator of a number of genes encoding proteasomal subunits. Plays a role in ergosterol and plasma membrane homeostasis, and subsequent azole resistance. Regulates the expression of 212 genes, activating 80 genes and repressing, likely in an indirect fashion, 132 genes. Targets comprise several proteasome and ergosterol biosynthesis genes, including ERG1, ERG2, ERG3, and ERG11. Directly regulates ERG11 expression through the 3'-TTGCAAA-5' binding motif. The polypeptide is C2H2-type transcription factor RPN4 (Candida glabrata (strain ATCC 2001 / BCRC 20586 / JCM 3761 / NBRC 0622 / NRRL Y-65 / CBS 138) (Yeast)).